Consider the following 495-residue polypeptide: MAWPRIFQRGALLSRFSHHHMVVFLLTFFSYSLLHASRKTFSNVKVSISKQWTPSAFNKSTELLPVEIWSSNHLFPSAEEATLFLGMLDTIFLFSYAVGLFISGIVGDRLNLRWVLSFGMCSSALVVFVFGTLTEWLHFYNKGLYCSLWIVNGLLQSTGWPCVVAVMGNWFGKAGRGVVFGLWSACASVGNILGACLASSVLQYGYEYAFLVTAAVQFAGGIIIFFGLLVSPEEIGIPGIETEDNFEEDSHRPLINGAENEDEAEPNYSIQEGNTVTQVKAISFYQACCLPGVIAYSLAYACLKLVNYSFFFWLPFYLSNNFGWKEAEADQLSIWYDVGGIIGGTLQGFISDMLQKRAPVLALSLLLAIGSLVGYSRSPNDKSINALLMAVTGFFIGGPSNMISSAISADLGRQELIQGSSEALATVTGIVDGTGSIGAAVGQYLVSLIQDNLGWMWVFYFFILMTSCTVLFISPLIVRETCSLMQRRQTRVLNE.

Residues 16 to 36 (FSHHHMVVFLLTFFSYSLLHA) form a helical membrane-spanning segment. Asparagine 58 carries an N-linked (GlcNAc...) asparagine glycan. 5 consecutive transmembrane segments (helical) span residues 82 to 102 (TLFL…GLFI), 114 to 134 (WVLS…GTLT), 148 to 168 (LWIV…AVMG), 178 to 198 (VVFG…ACLA), and 210 to 230 (FLVT…GLLV). The N-linked (GlcNAc...) asparagine glycan is linked to asparagine 267. The next 6 membrane-spanning stretches (helical) occupy residues 298 to 318 (LAYA…PFYL), 334 to 354 (IWYD…SDML), 358 to 378 (APVL…YSRS), 387 to 407 (LLMA…SSAI), 429 to 449 (GIVD…VSLI), and 453 to 473 (LGWM…VLFI).

It belongs to the major facilitator superfamily. Organophosphate:Pi antiporter (OPA) (TC 2.A.1.4) family. Interacts with ATRAID; the interaction is direct and both proteins are mutually dependent for their stability. In terms of processing, glycosylated.

It is found in the endoplasmic reticulum membrane. The protein resides in the lysosome membrane. Functionally, unlike the other SLC37 members, lacks glucose-6-phosphate antiporter activity. In osteoclasts, forms a transporter complex with ATRAID for nitrogen-containing-bisphophonates (N-BPs) required for releasing N-BP molecules that have trafficked to lysosomes through fluid-phase endocytosis into the cytosol. This Bos taurus (Bovine) protein is Sugar phosphate exchanger 3 (SLC37A3).